The primary structure comprises 456 residues: MRNSWIKPRLGQKNITQMNFAKNGIITEEMNYVAQKENLPSSLIMEEVARGRLIIPANINHVNLEPMAIGIASKCKVNANIGASPNASDINEEVEKLRLAVKYGADTVMDLSTGGVNLDEVRQAIIKESSVPIGTVPVYQALESVHGSIDRLTEDDFLHIIEKHCQQGVDYQTIHAGLLIEHLPKVKGRITGIVSRGGGILAQWMLHHFKQNPLYTRFDDICEIFKKYDCTFSLGDSLRPGCLHDASDDAQLAELKTLGELTRRAWAHNVQVMVEGPGHVPMDQIEFNVRKQMEECSEAPFYVLGPLVTDISPGYDHISSAIGAAMAGWYGTAMLCYVTPKEHLGLPNAEDVREGLIAYKIAAHAADIARHRAGARDRDDELSHARYTFDWNKQFELSLDPERAKQYHDETLPEEIFKKAEFCSMCGPKHCPMNSKISDETLDQLNNKLAKCDIKV.

Substrate is bound by residues Asn-80, Met-109, Tyr-139, His-175, 195 to 197, 236 to 239, and Glu-275; these read SRG and DSLR. Residue His-279 coordinates Zn(2+). A substrate-binding site is contributed by Tyr-302. Zn(2+) is bound at residue His-343. [4Fe-4S] cluster contacts are provided by Cys-423, Cys-426, and Cys-431.

The protein belongs to the ThiC family. Requires [4Fe-4S] cluster as cofactor.

It catalyses the reaction 5-amino-1-(5-phospho-beta-D-ribosyl)imidazole + S-adenosyl-L-methionine = 4-amino-2-methyl-5-(phosphooxymethyl)pyrimidine + CO + 5'-deoxyadenosine + formate + L-methionine + 3 H(+). The protein operates within cofactor biosynthesis; thiamine diphosphate biosynthesis. Functionally, catalyzes the synthesis of the hydroxymethylpyrimidine phosphate (HMP-P) moiety of thiamine from aminoimidazole ribotide (AIR) in a radical S-adenosyl-L-methionine (SAM)-dependent reaction. The chain is Phosphomethylpyrimidine synthase from Prochlorococcus marinus (strain MIT 9515).